The following is a 399-amino-acid chain: MERRLFTSESVSEGHPDKVADQISDAILDAMLEKDPNSHVACETIVTTGMVFVFGEISTNAYVDIQDVVRKTILRIGYDRPELGFDGNNCAVMVDIDEQSPDIAGGVDHSLETRENESDQDELDQIGAGDQGLMFGFAIKETPELMPLPISLAHRLMRRVASLRKDHTLDWLRPDAKAQVTVEYDENNNPLRVDTVVISTQTDAEVSNKEIRRAMIDLVIKEVIPARYLDEKTKFLINPSGRFVIGGPKGDSGLTGRKIIVDTYGGYARHGGGAFSGKDSTKVDRSASYAARYVAKNIVAAGLAYRCEVQLAYAIGVAHPVSIMIDTAGTGKVDDDLLTEAVRHVFDLRPAGIIKMLDLRRPIYEQTAAYGHFGRTDVDLSWEKTDKTQDLLDYIKNNK.

Histidine 15 contributes to the ATP binding site. Aspartate 17 is a Mg(2+) binding site. Residue glutamate 43 participates in K(+) binding. Residues glutamate 56 and glutamine 99 each coordinate L-methionine. A flexible loop region spans residues 99 to 109; the sequence is QSPDIAGGVDH. ATP-binding positions include 175–177, 242–243, aspartate 251, 257–258, alanine 274, and lysine 278; these read DAK, RF, and RK. L-methionine is bound at residue aspartate 251. Position 282 (lysine 282) interacts with L-methionine.

The protein belongs to the AdoMet synthase family. In terms of assembly, homotetramer; dimer of dimers. Mg(2+) is required as a cofactor. It depends on K(+) as a cofactor.

The protein localises to the cytoplasm. It catalyses the reaction L-methionine + ATP + H2O = S-adenosyl-L-methionine + phosphate + diphosphate. The protein operates within amino-acid biosynthesis; S-adenosyl-L-methionine biosynthesis; S-adenosyl-L-methionine from L-methionine: step 1/1. Functionally, catalyzes the formation of S-adenosylmethionine (AdoMet) from methionine and ATP. The overall synthetic reaction is composed of two sequential steps, AdoMet formation and the subsequent tripolyphosphate hydrolysis which occurs prior to release of AdoMet from the enzyme. The protein is S-adenosylmethionine synthase of Lactobacillus helveticus (strain DPC 4571).